The chain runs to 398 residues: Serine/threonine-protein phosphatase 4 regulatory subunit 2-B (398 aa).

The tract at residues 138–398 (SSEKNTSPSL…NAPEEPMEQD (261 aa)) is disordered. 3 stretches are compositionally biased toward polar residues: residues 139-149 (SEKNTSPSLNR), 156-170 (PSNSQSYTDRSNVNG), and 183-193 (TLSSPMNTNGL). A compositionally biased stretch (basic and acidic residues) spans 197–211 (MENKESDLQQKEKSL). Residues 278–294 (ASTSADKGKESCQTAQT) are compositionally biased toward polar residues. A compositionally biased stretch (low complexity) spans 338-366 (SESACSLNSEEPNSAAAAASTAGTDSSEG).

It belongs to the PPP4R2 family. In terms of assembly, serine/threonine-protein phosphatase 4 (PP4) occurs in different assemblies of the catalytic and one or more regulatory subunits.

Regulatory subunit of serine/threonine-protein phosphatase 4 (PP4). In Xenopus laevis (African clawed frog), this protein is Serine/threonine-protein phosphatase 4 regulatory subunit 2-B (ppp4r2-b).